The primary structure comprises 196 residues: Large ribosomal subunit protein bL25 (196 aa).

The protein belongs to the bacterial ribosomal protein bL25 family. CTC subfamily. Part of the 50S ribosomal subunit; part of the 5S rRNA/L5/L18/L25 subcomplex. Contacts the 5S rRNA. Binds to the 5S rRNA independently of L5 and L18.

In terms of biological role, this is one of the proteins that binds to the 5S RNA in the ribosome where it forms part of the central protuberance. The polypeptide is Large ribosomal subunit protein bL25 (Bacteroides thetaiotaomicron (strain ATCC 29148 / DSM 2079 / JCM 5827 / CCUG 10774 / NCTC 10582 / VPI-5482 / E50)).